Consider the following 208-residue polypeptide: Fibroblast growth factor 6 (208 aa).

Residues 1–37 (MALGQKLFITMSRGAGRLQGTLWALVFLGILVGMVVP) form the signal peptide. N-linked (GlcNAc...) asparagine glycosylation occurs at Asn-45. Cys-90 and Cys-157 form a disulfide bridge.

This sequence belongs to the heparin-binding growth factors family. As to quaternary structure, interacts with FGFR1, FGFR2 and FGFR4. Affinity between fibroblast growth factors (FGFs) and their receptors is increased by heparan sulfate glycosaminoglycans that function as coreceptors. In terms of tissue distribution, leukemia cell lines with platelet/ megakaryocytic differentiation potential.

Its subcellular location is the secreted. The protein localises to the extracellular space. In terms of biological role, plays an important role in the regulation of cell proliferation, cell differentiation, angiogenesis and myogenesis, and is required for normal muscle regeneration. The protein is Fibroblast growth factor 6 (FGF6) of Homo sapiens (Human).